A 313-amino-acid chain; its full sequence is Protoheme IX farnesyltransferase (313 aa).

A run of 8 helical transmembrane segments spans residues V32–H52, P53–L73, I120–I140, I153–G173, L180–F200, I226–F246, A248–V268, and L284–V304.

It belongs to the UbiA prenyltransferase family. Protoheme IX farnesyltransferase subfamily.

The protein resides in the cell inner membrane. It carries out the reaction heme b + (2E,6E)-farnesyl diphosphate + H2O = Fe(II)-heme o + diphosphate. It participates in porphyrin-containing compound metabolism; heme O biosynthesis; heme O from protoheme: step 1/1. Functionally, converts heme B (protoheme IX) to heme O by substitution of the vinyl group on carbon 2 of heme B porphyrin ring with a hydroxyethyl farnesyl side group. The protein is Protoheme IX farnesyltransferase of Rhodopseudomonas palustris (strain HaA2).